The primary structure comprises 513 residues: ATP synthase subunit alpha 2 (513 aa).

Residue 169 to 176 (GDRQVGKT) coordinates ATP.

This sequence belongs to the ATPase alpha/beta chains family. F-type ATPases have 2 components, CF(1) - the catalytic core - and CF(0) - the membrane proton channel. CF(1) has five subunits: alpha(3), beta(3), gamma(1), delta(1), epsilon(1). CF(0) has three main subunits: a(1), b(2) and c(9-12). The alpha and beta chains form an alternating ring which encloses part of the gamma chain. CF(1) is attached to CF(0) by a central stalk formed by the gamma and epsilon chains, while a peripheral stalk is formed by the delta and b chains.

It localises to the cell inner membrane. The enzyme catalyses ATP + H2O + 4 H(+)(in) = ADP + phosphate + 5 H(+)(out). Functionally, produces ATP from ADP in the presence of a proton gradient across the membrane. The alpha chain is a regulatory subunit. This Psychromonas ingrahamii (strain DSM 17664 / CCUG 51855 / 37) protein is ATP synthase subunit alpha 2.